Reading from the N-terminus, the 318-residue chain is Biotin synthase (318 aa).

A Radical SAM core domain is found at 36 to 258 (HDPREVQLCT…VATTRILFPD (223 aa)). Cys-54, Cys-58, and Cys-61 together coordinate [4Fe-4S] cluster. 4 residues coordinate [2Fe-2S] cluster: Cys-98, Cys-130, Cys-190, and Arg-262.

It belongs to the radical SAM superfamily. Biotin synthase family. As to quaternary structure, homodimer. Requires [4Fe-4S] cluster as cofactor. [2Fe-2S] cluster serves as cofactor.

It catalyses the reaction (4R,5S)-dethiobiotin + (sulfur carrier)-SH + 2 reduced [2Fe-2S]-[ferredoxin] + 2 S-adenosyl-L-methionine = (sulfur carrier)-H + biotin + 2 5'-deoxyadenosine + 2 L-methionine + 2 oxidized [2Fe-2S]-[ferredoxin]. Its pathway is cofactor biosynthesis; biotin biosynthesis; biotin from 7,8-diaminononanoate: step 2/2. Functionally, catalyzes the conversion of dethiobiotin (DTB) to biotin by the insertion of a sulfur atom into dethiobiotin via a radical-based mechanism. In Gloeobacter violaceus (strain ATCC 29082 / PCC 7421), this protein is Biotin synthase.